The sequence spans 155 residues: Ribonuclease H (155 aa).

The RNase H type-1 domain occupies 1 to 142; the sequence is MTKQVEIFTD…CDELARAAAM (142 aa). Mg(2+) contacts are provided by aspartate 10, glutamate 48, aspartate 70, and aspartate 134.

This sequence belongs to the RNase H family. Monomer. The cofactor is Mg(2+).

The protein resides in the cytoplasm. It carries out the reaction Endonucleolytic cleavage to 5'-phosphomonoester.. In terms of biological role, endonuclease that specifically degrades the RNA of RNA-DNA hybrids. The chain is Ribonuclease H from Enterobacter sp. (strain 638).